Here is a 705-residue protein sequence, read N- to C-terminus: Double-strand break repair protein MRE11 (705 aa).

Aspartate 15, histidine 17, aspartate 55, and asparagine 122 together coordinate Mn(2+). Histidine 123 acts as the Proton donor in catalysis. Positions 220, 248, and 250 each coordinate Mn(2+). Basic and acidic residues predominate over residues 505-514 (RSLRSKEDSR). The disordered stretch occupies residues 505 to 705 (RSLRSKEDSR…TRNYGAVRRR (201 aa)). Polar residues-rich tracts occupy residues 515 to 538 (FTSS…LNSF) and 589 to 605 (SMKQ…SSAA). Residues 641–663 (GRKRAAPRGGRGRGRGATAKRGR) are compositionally biased toward basic residues.

The protein belongs to the MRE11/RAD32 family. In terms of assembly, component of the MRN complex composed of two heterodimers RAD50/MRE11 associated with a single NBS1. The cofactor is Mn(2+).

Its subcellular location is the nucleus. The protein resides in the chromosome. Core component of the MRN complex, which plays a central role in double-strand break (DSB) repair, DNA recombination, maintenance of telomere integrity and meiosis. The MRN complex is involved in the repair of DNA double-strand breaks (DSBs) via homologous recombination (HR), an error-free mechanism which primarily occurs during S and G2 phases. The complex (1) mediates the end resection of damaged DNA, which generates proper single-stranded DNA, a key initial steps in HR, and is (2) required for the recruitment of other repair factors and efficient activation of ATM and ATR upon DNA damage. Within the MRN complex, MRE11 possesses both single-strand endonuclease activity and double-strand-specific 3'-5' exonuclease activity. MRE11 first endonucleolytically cleaves the 5' strand at DNA DSB ends to prevent non-homologous end joining (NHEJ) and licence HR. It then generates a single-stranded DNA gap via 3' to 5' exonucleolytic degradation, which is required for single-strand invasion and recombination. The chain is Double-strand break repair protein MRE11 from Oryza sativa subsp. indica (Rice).